The following is a 137-amino-acid chain: Small ribosomal subunit protein eS17 (137 aa).

Belongs to the eukaryotic ribosomal protein eS17 family. Component of the small ribosomal subunit. Mature ribosomes consist of a small (40S) and a large (60S) subunit. The 40S subunit contains about 32 different proteins and 1 molecule of RNA (18S). The 60S subunit contains 45 different proteins and 3 molecules of RNA (25S, 5.8S and 5S).

The protein localises to the cytoplasm. Functionally, component of the ribosome, a large ribonucleoprotein complex responsible for the synthesis of proteins in the cell. The small ribosomal subunit (SSU) binds messenger RNAs (mRNAs) and translates the encoded message by selecting cognate aminoacyl-transfer RNA (tRNA) molecules. The large subunit (LSU) contains the ribosomal catalytic site termed the peptidyl transferase center (PTC), which catalyzes the formation of peptide bonds, thereby polymerizing the amino acids delivered by tRNAs into a polypeptide chain. The nascent polypeptides leave the ribosome through a tunnel in the LSU and interact with protein factors that function in enzymatic processing, targeting, and the membrane insertion of nascent chains at the exit of the ribosomal tunnel. The chain is Small ribosomal subunit protein eS17 (RPS17B) from Candida albicans (strain SC5314 / ATCC MYA-2876) (Yeast).